Here is a 110-residue protein sequence, read N- to C-terminus: Keratin, type I cytoskeletal 19 (110 aa).

A head region spans residues 1 to 8 (FGSGGVFR). Position 3 is a phosphoserine (S3). Residues 7–110 (FRITMQNLND…KLEQEIATYR (104 aa)) enclose the IF rod domain. Omega-N-methylarginine is present on R8. A coil 1A region spans residues 9–42 (ITMQNLNDRLASYLDKVRALEQANGELEVKIRDW). The linker 1 stretch occupies residues 43-45 (YQK). Residues 46–83 (IVLQIDNARTKFETEQALRVLDELTLARKNHEEEISAL) form a coil 1B region. The segment at 85–110 (ADTERQNQEYQQLMDIKLEQEIATYR) is coil 2. The tract at residues 85–110 (ADTERQNQEYQQLMDIKLEQEIATYR) is necessary for interaction with PNN.

It belongs to the intermediate filament family. In terms of assembly, heterotetramer of two type I and two type II keratins. Interacts with PNN and the actin-binding domain of DMD.

Its function is as follows. Involved in the organization of myofibers. Together with KRT8, helps to link the contractile apparatus to dystrophin at the costameres of striated muscle. In Mesocricetus auratus (Golden hamster), this protein is Keratin, type I cytoskeletal 19.